A 412-amino-acid polypeptide reads, in one-letter code: Lipid droplet organization protein LDO45 (412 aa).

Topologically, residues 1–170 (MAARNRRKNN…TVEKLNALQN (170 aa)) are cytoplasmic. A helical transmembrane segment spans residues 171–191 (SLYEVFWIIFIYLNYWFPNVG). Topologically, residues 192-247 (DYVSNTFGQQDSIIIRISLSKSHFRALREKSSQKVQQAVKNIYFCFQEKPYLTAFK) are lumenal. Residues 248-268 (VSFAIGLVIPCSLLFLIMVST) form a helical membrane-spanning segment. At 269-271 (ATF) the chain is on the cytoplasmic side. A helical transmembrane segment spans residues 272–292 (FFFVYLTLFVVIGFFSSLFII). Position 293 (proline 293) is a topological domain, lumenal. The helical transmembrane segment at 294–314 (LLGISFVFAIGVVSFGFCSNM) threads the bilayer. Residues 315–412 (SFKMAQLIYV…NKAGNKFQLS (98 aa)) are Cytoplasmic-facing. Residues 347 to 374 (QEPQEPLSTLRPVSNPTIPSPLRQTARP) are disordered. Residues 357-373 (RPVSNPTIPSPLRQTAR) show a composition bias toward polar residues.

Interacts specifically with the seipin complex FLD1-LDB16. Only a fraction appears to associate with the seipin core components, suggesting that it may be an ancillary subunit of the complex.

It localises to the endoplasmic reticulum membrane. It is found in the lipid droplet. In terms of biological role, involved in lipid droplet (LD) organization. Modulates triglyceride (TAG) storage by reducing DGA1 LD localization. Promotes LD targeting of some proteins, including PDR16. This Saccharomyces cerevisiae (strain ATCC 204508 / S288c) (Baker's yeast) protein is Lipid droplet organization protein LDO45.